The chain runs to 81 residues: MIDNAYHIDSGYHYLVCNMDKQLNKAPTMNDEPAAKPPAGNKPLSVSSEQLLGEHGVAFIIHQGECYQLRQTKAGKLILTK.

The interval 26 to 46 (APTMNDEPAAKPPAGNKPLSV) is disordered.

It to E.coli YdiE.

In terms of biological role, this protein is involved in the uptake of hemin. This is Hemin uptake protein HemP (hemP) from Yersinia enterocolitica.